The primary structure comprises 827 residues: Translation initiation factor IF-2 (827 aa).

A disordered region spans residues 49-205 (ALNREKEEKE…GAPDKKREWE (157 aa)). 6 stretches are compositionally biased toward basic and acidic residues: residues 50-73 (LNRE…KAEA), 96-106 (RPREQRSDRPQ), 116-129 (PEPR…RPGE), 137-150 (RPRD…KERG), 157-168 (FGEKKERPPFPR), and 182-205 (EAPK…REWE). The 170-residue stretch at 326–495 (PRPPIVTVMG…LLVADLKELK (170 aa)) folds into the tr-type G domain. Residues 335-342 (GHVDHGKT) are G1. 335–342 (GHVDHGKT) serves as a coordination point for GTP. The tract at residues 360-364 (GITQH) is G2. The interval 381-384 (DTPG) is G3. GTP is bound by residues 381 to 385 (DTPGH) and 435 to 438 (NKID). The segment at 435 to 438 (NKID) is G4. A G5 region spans residues 471 to 473 (SAL).

It belongs to the TRAFAC class translation factor GTPase superfamily. Classic translation factor GTPase family. IF-2 subfamily.

Its subcellular location is the cytoplasm. Functionally, one of the essential components for the initiation of protein synthesis. Protects formylmethionyl-tRNA from spontaneous hydrolysis and promotes its binding to the 30S ribosomal subunits. Also involved in the hydrolysis of GTP during the formation of the 70S ribosomal complex. In Carboxydothermus hydrogenoformans (strain ATCC BAA-161 / DSM 6008 / Z-2901), this protein is Translation initiation factor IF-2.